The sequence spans 29 residues: LPYPVNCKTECECVMCGLGIICKQCYYQQ.

In terms of processing, contains 3 disulfide bonds. In terms of tissue distribution, expressed by the venom gland.

The protein resides in the secreted. This chain is Neurotoxin BmK A3-6, found in Olivierus martensii (Manchurian scorpion).